The primary structure comprises 443 residues: ATP-dependent protease ATPase subunit HslU (443 aa).

ATP is bound by residues I18, 60–65, D256, E321, and R393; that span reads GVGKTE.

The protein belongs to the ClpX chaperone family. HslU subfamily. A double ring-shaped homohexamer of HslV is capped on each side by a ring-shaped HslU homohexamer. The assembly of the HslU/HslV complex is dependent on binding of ATP.

It is found in the cytoplasm. Functionally, ATPase subunit of a proteasome-like degradation complex; this subunit has chaperone activity. The binding of ATP and its subsequent hydrolysis by HslU are essential for unfolding of protein substrates subsequently hydrolyzed by HslV. HslU recognizes the N-terminal part of its protein substrates and unfolds these before they are guided to HslV for hydrolysis. The polypeptide is ATP-dependent protease ATPase subunit HslU (Escherichia coli O139:H28 (strain E24377A / ETEC)).